We begin with the raw amino-acid sequence, 72 residues long: Late effector protein 1 (72 aa).

A signal peptide spans M1–G22. N66 carries N-linked (GlcNAc...) asparagine glycosylation.

The protein belongs to the lep1 family. In terms of assembly, interacts at the cell wall with secreted rep1 repellent peptides.

It is found in the secreted. Its subcellular location is the cell wall. Its function is as follows. Core effector contributing to spore formation and tumor formation at the host plant. Modulates surface hydrophobicity promoting cell-cell or cell-surface contacts. Lep1 and rep1 interact in aerial hyphae to form a strong hydrophobic layer. Plays a crucial role in hyphal aggregation that might be a prerequisite for strong proliferation of diploid cells and for induction of the morphological changes associated with spore formation. The chain is Late effector protein 1 from Sporisorium reilianum (strain SRZ2) (Maize head smut fungus).